We begin with the raw amino-acid sequence, 378 residues long: Virion membrane protein A16 (378 aa).

A lipid anchor (N-myristoyl glycine; by host) is attached at G2. Residues 2–342 (GAAVTLNRIK…VVKDKIKLPT (341 aa)) lie on the Virion surface side of the membrane. The chain crosses the membrane as a helical; Signal-anchor for type II membrane protein span at residues 343 to 363 (WLGAAITLVVISVIFYFISIY). Residues 364 to 378 (SRPKIKTNDINVRRR) lie on the Intravirion side of the membrane.

The protein belongs to the poxviridae A16/G9/J5 family. As to quaternary structure, part of a stable entry-fusion complex (EFC) which is at least composed of proteins A16, A21, A28, G3, G9, H2, J5, and L5. Formation of the viral membrane is necessary for the assembly of the complex. Interacts with G9. Post-translationally, most cysteines are linked by disulfide bonds. They are created by the viral disulfide bond formation pathway, a poxvirus-specific redox pathway that operates on the cytoplasmic side of the MV membranes.

The protein localises to the virion membrane. Its function is as follows. Envelope protein part of the entry-fusion complex responsible for the virus membrane fusion with host cell membrane during virus entry. Also plays a role in cell-cell fusion (syncytium formation). The polypeptide is Virion membrane protein A16 (Oryctolagus cuniculus (Rabbit)).